The sequence spans 1217 residues: CST complex subunit CTC1 (1217 aa).

Residues 328–347 (EADPKPLPMPSNSEDKKDPE) are disordered.

The protein belongs to the CTC1 family. As to quaternary structure, component of the CST complex, composed of TEN1/C17orf106, CTC1/C17orf68 and STN1; in the complex interacts directly with STN1. Interacts with ACD and POT1.

The protein resides in the nucleus. Its subcellular location is the chromosome. It is found in the telomere. Its function is as follows. Component of the CST complex proposed to act as a specialized replication factor promoting DNA replication under conditions of replication stress or natural replication barriers such as the telomere duplex. The CST complex binds single-stranded DNA with high affinity in a sequence-independent manner, while isolated subunits bind DNA with low affinity by themselves. Initially the CST complex has been proposed to protect telomeres from DNA degradation. However, the CST complex has been shown to be involved in several aspects of telomere replication. The CST complex inhibits telomerase and is involved in telomere length homeostasis; it is proposed to bind to newly telomerase-synthesized 3' overhangs and to terminate telomerase action implicating the association with the ACD:POT1 complex thus interfering with its telomerase stimulation activity. The CST complex is also proposed to be involved in fill-in synthesis of the telomeric C-strand probably implicating recruitment and activation of DNA polymerase alpha. The CST complex facilitates recovery from many forms of exogenous DNA damage; seems to be involved in the re-initiation of DNA replication at repaired forks and/or dormant origins. Involved in telomere maintenance. Involved in genome stability. May be in involved in telomeric C-strand fill-in during late S/G2 phase. The sequence is that of CST complex subunit CTC1 (CTC1) from Homo sapiens (Human).